Consider the following 184-residue polypeptide: Large ribosomal subunit protein eL18 (184 aa).

This sequence belongs to the eukaryotic ribosomal protein eL18 family.

Its subcellular location is the cytoplasm. The chain is Large ribosomal subunit protein eL18 (RPL18) from Theileria parva (East coast fever infection agent).